The primary structure comprises 626 residues: Trehalase (626 aa).

The next 2 membrane-spanning stretches (helical) occupy residues lysine 20–leucine 40 and serine 45–serine 65. Residues arginine 224, aspartate 232, asparagine 268, arginine 277, glutamine 279, arginine 344, and glutamate 346 each contribute to the alpha,alpha-trehalose site. Active-site proton donor/acceptor residues include aspartate 380 and glutamate 580. The alpha,alpha-trehalose site is built by glutamate 580 and glutamate 595.

It belongs to the glycosyl hydrolase 37 family. In terms of assembly, forms homodimers. In terms of tissue distribution, highly expressed in flowers. Expressed at low levels in leaves and stems. Expressed in guard cells.

The protein localises to the cell membrane. The protein resides in the cytoplasm. It is found in the nucleus. The catalysed reaction is alpha,alpha-trehalose + H2O = alpha-D-glucose + beta-D-glucose. Its function is as follows. Involved in the regulation of trehalose content by hydrolyzing trehalose to glucose. May play a role in the regulation of abscisic acid-induced stomatal closure in response to drought stress. This is Trehalase (TRE1) from Arabidopsis thaliana (Mouse-ear cress).